We begin with the raw amino-acid sequence, 333 residues long: 3-isopropylmalate/3-methylmalate dehydrogenase (333 aa).

Residues arginine 81, arginine 91, arginine 112, and aspartate 203 each coordinate substrate. Aspartate 203, aspartate 227, and aspartate 231 together coordinate Mg(2+). 260-272 is an NAD(+) binding site; it reads GSAPDIAGKKIAN.

It belongs to the isocitrate and isopropylmalate dehydrogenases family. As to quaternary structure, homotetramer. It depends on Mg(2+) as a cofactor. The cofactor is Mn(2+).

The protein resides in the cytoplasm. It carries out the reaction (2R,3S)-3-isopropylmalate + NAD(+) = 4-methyl-2-oxopentanoate + CO2 + NADH. The enzyme catalyses (2R,3S)-3-methylmalate + NAD(+) = 2-oxobutanoate + CO2 + NADH. The catalysed reaction is (R)-malate + NAD(+) = pyruvate + CO2 + NADH. It participates in amino-acid biosynthesis; L-leucine biosynthesis; L-leucine from 3-methyl-2-oxobutanoate: step 3/4. The protein operates within amino-acid biosynthesis; L-isoleucine biosynthesis; 2-oxobutanoate from pyruvate: step 3/3. Its function is as follows. Catalyzes the oxidation of 3-carboxy-2-hydroxy-4-methylpentanoate (3-isopropylmalate) to 3-carboxy-4-methyl-2-oxopentanoate, which decarboxylates to 4-methyl-2-oxopentanoate (2-oxoisocaproate). Also catalyzes the oxidative decarboxylation of 3-methylmalate to 2-oxobutyrate, and that of D-malate to pyruvate. Cannot use NADP(+) instead of NAD(+). Cannot catalyze the oxidation of L-malate, L-tartrate, D-tartrate, DL-isocitrate, or DL-lactate. This is 3-isopropylmalate/3-methylmalate dehydrogenase (leuB) from Methanocaldococcus jannaschii (strain ATCC 43067 / DSM 2661 / JAL-1 / JCM 10045 / NBRC 100440) (Methanococcus jannaschii).